A 396-amino-acid chain; its full sequence is 1-deoxy-D-xylulose 5-phosphate reductoisomerase (396 aa).

Thr-15, Gly-16, Ser-17, Ile-18, Gly-41, and Asn-129 together coordinate NADPH. Residue Lys-130 participates in 1-deoxy-D-xylulose 5-phosphate binding. Glu-131 contributes to the NADPH binding site. Residue Asp-155 participates in Mn(2+) binding. Residues Ser-156, Glu-157, Ser-182, and His-205 each contribute to the 1-deoxy-D-xylulose 5-phosphate site. Mn(2+) is bound at residue Glu-157. Gly-211 lines the NADPH pocket. Positions 218, 223, 224, and 227 each coordinate 1-deoxy-D-xylulose 5-phosphate. Glu-227 serves as a coordination point for Mn(2+).

The protein belongs to the DXR family. Mg(2+) is required as a cofactor. It depends on Mn(2+) as a cofactor.

It catalyses the reaction 2-C-methyl-D-erythritol 4-phosphate + NADP(+) = 1-deoxy-D-xylulose 5-phosphate + NADPH + H(+). The protein operates within isoprenoid biosynthesis; isopentenyl diphosphate biosynthesis via DXP pathway; isopentenyl diphosphate from 1-deoxy-D-xylulose 5-phosphate: step 1/6. Functionally, catalyzes the NADPH-dependent rearrangement and reduction of 1-deoxy-D-xylulose-5-phosphate (DXP) to 2-C-methyl-D-erythritol 4-phosphate (MEP). The chain is 1-deoxy-D-xylulose 5-phosphate reductoisomerase from Xanthomonas oryzae pv. oryzae (strain PXO99A).